We begin with the raw amino-acid sequence, 207 residues long: Urease accessory protein UreG (207 aa).

14 to 21 (GPVGSGKT) is a binding site for GTP.

This sequence belongs to the SIMIBI class G3E GTPase family. UreG subfamily. Homodimer. UreD, UreF and UreG form a complex that acts as a GTP-hydrolysis-dependent molecular chaperone, activating the urease apoprotein by helping to assemble the nickel containing metallocenter of UreC. The UreE protein probably delivers the nickel.

It is found in the cytoplasm. Facilitates the functional incorporation of the urease nickel metallocenter. This process requires GTP hydrolysis, probably effectuated by UreG. The chain is Urease accessory protein UreG from Rhodopseudomonas palustris (strain BisB18).